Here is a 75-residue protein sequence, read N- to C-terminus: Cytochrome c oxidase subunit 6C (75 aa).

Topologically, residues M1–G13 are mitochondrial matrix. Residues L14–R54 form a helical membrane-spanning segment. At N55–K75 the chain is on the mitochondrial intermembrane side.

It belongs to the cytochrome c oxidase subunit 6c family. As to quaternary structure, component of the cytochrome c oxidase (complex IV, CIV), a multisubunit enzyme composed of 14 subunits. The complex is composed of a catalytic core of 3 subunits MT-CO1, MT-CO2 and MT-CO3, encoded in the mitochondrial DNA, and 11 supernumerary subunits COX4I1 (or COX4I2), COX5A, COX5B, COX6A1 (or COX6A2), COX6B1 (or COX6B2), COX6C, COX7A2 (or COX7A1), COX7B, COX7C, COX8A and NDUFA4, which are encoded in the nuclear genome. The complex exists as a monomer or a dimer and forms supercomplexes (SCs) in the inner mitochondrial membrane with NADH-ubiquinone oxidoreductase (complex I, CI) and ubiquinol-cytochrome c oxidoreductase (cytochrome b-c1 complex, complex III, CIII), resulting in different assemblies (supercomplex SCI(1)III(2)IV(1) and megacomplex MCI(2)III(2)IV(2)).

The protein localises to the mitochondrion inner membrane. It participates in energy metabolism; oxidative phosphorylation. Component of the cytochrome c oxidase, the last enzyme in the mitochondrial electron transport chain which drives oxidative phosphorylation. The respiratory chain contains 3 multisubunit complexes succinate dehydrogenase (complex II, CII), ubiquinol-cytochrome c oxidoreductase (cytochrome b-c1 complex, complex III, CIII) and cytochrome c oxidase (complex IV, CIV), that cooperate to transfer electrons derived from NADH and succinate to molecular oxygen, creating an electrochemical gradient over the inner membrane that drives transmembrane transport and the ATP synthase. Cytochrome c oxidase is the component of the respiratory chain that catalyzes the reduction of oxygen to water. Electrons originating from reduced cytochrome c in the intermembrane space (IMS) are transferred via the dinuclear copper A center (CU(A)) of subunit 2 and heme A of subunit 1 to the active site in subunit 1, a binuclear center (BNC) formed by heme A3 and copper B (CU(B)). The BNC reduces molecular oxygen to 2 water molecules using 4 electrons from cytochrome c in the IMS and 4 protons from the mitochondrial matrix. In Homo sapiens (Human), this protein is Cytochrome c oxidase subunit 6C (COX6C).